Consider the following 199-residue polypeptide: MKKVVLASSSPRRIELLKQFGIKFDIVPSNVDEIIDPDLPPEKNAMNLAKKKAEEVFRRLGESAKDSLIISADTIVFIEGTILGKPSNEEEAFYMLKKISAKRHTVFTGVCIIDDSCRQILVDFEKSYVYIKQMSDEEILRYIKTGEPFDKAGAYAIQGFGSLIVEKVEGCFYNVVGLPLYKLNTMLQKLGYDLMKGEL.

Asp-73 serves as the catalytic Proton acceptor.

This sequence belongs to the Maf family. YhdE subfamily. A divalent metal cation is required as a cofactor.

The protein localises to the cytoplasm. The enzyme catalyses dTTP + H2O = dTMP + diphosphate + H(+). It catalyses the reaction UTP + H2O = UMP + diphosphate + H(+). Functionally, nucleoside triphosphate pyrophosphatase that hydrolyzes dTTP and UTP. May have a dual role in cell division arrest and in preventing the incorporation of modified nucleotides into cellular nucleic acids. In Caldicellulosiruptor saccharolyticus (strain ATCC 43494 / DSM 8903 / Tp8T 6331), this protein is dTTP/UTP pyrophosphatase.